We begin with the raw amino-acid sequence, 155 residues long: DNA-directed RNA polymerases I, II, and III subunit RPABC2 (155 aa).

Residues 1–19 show a composition bias toward acidic residues; sequence MSDYEEAFNDGNENFEDFD. Residues 1 to 57 form a disordered region; the sequence is MSDYEEAFNDGNENFEDFDVEHFSDEETYEEKPQFKDGETTDANGKTIVTGGNGPED. The segment covering 20–39 has biased composition (basic and acidic residues); the sequence is VEHFSDEETYEEKPQFKDGE. Serine 24 is modified (phosphoserine). Residues 111–132 are leucine-zipper; that stretch reads LEGETDPLRIAMKELAEKKIPL.

This sequence belongs to the archaeal Rpo6/eukaryotic RPB6 RNA polymerase subunit family. Component of the RNA polymerase I (Pol I), RNA polymerase II (Pol II) and RNA polymerase III (Pol III) complexes. Component of the RNA polymerase I (Pol I) complex consisting of 14 subunits: RPA135, RPA190, RPC40, RPA14, RPB5, RPO26, RPA43, RPB8, RPA12, RPB10, RPC19, RPC10, RPA49 and RPA34. The complex is composed of a horseshoe-shaped core containing ten subunits (RPA135, RPA190, RPB5, RPO26, RPB8, RPB10, RPC10, RPA12, RPC19 and RPC40) where RPA135 and RPA190 form the DNA-binding cleft. Outside of the core, RPA14 and RPA43 form the stalk that mediates interactions with transcription initiation factors and newly synthesized RNA. Component of the RNA polymerase II (Pol II) complex consisting of 12 subunits: RPO21, RPB2, RPB3, RPB4, RPB5, RPO26, RPB7, RPB8, RPB9, RPB10 and RPC10. Component of the RNA polymerase III (Pol III) complex consisting of 17 subunits.

It localises to the cytoplasm. Its subcellular location is the nucleus. Its function is as follows. DNA-dependent RNA polymerases catalyze the transcription of DNA into RNA using the four ribonucleoside triphosphates as substrates. Common component of RNA polymerases I, II and III which synthesize ribosomal RNA precursors, mRNA precursors and many functional non-coding RNAs, and small RNAs, such as 5S rRNA and tRNAs, respectively. Pol II is the central component of the basal RNA polymerase II transcription machinery. RNA polymerases are composed of mobile elements that move relative to each other. In Pol II, RPB6 is part of the clamp element and together with parts of RPB1 and RPB2 forms a pocket to which the RPB4-RPB7 subcomplex binds. In Saccharomyces cerevisiae (strain ATCC 204508 / S288c) (Baker's yeast), this protein is DNA-directed RNA polymerases I, II, and III subunit RPABC2 (RPO26).